The sequence spans 187 residues: Orotate phosphoribosyltransferase (187 aa).

5-phospho-alpha-D-ribose 1-diphosphate contacts are provided by residues arginine 103, lysine 104, lysine 107, and glutamate 129–serine 137. Orotate is bound by residues threonine 133 and arginine 161.

Belongs to the purine/pyrimidine phosphoribosyltransferase family. PyrE subfamily. As to quaternary structure, homodimer. The cofactor is Mg(2+).

The enzyme catalyses orotidine 5'-phosphate + diphosphate = orotate + 5-phospho-alpha-D-ribose 1-diphosphate. It functions in the pathway pyrimidine metabolism; UMP biosynthesis via de novo pathway; UMP from orotate: step 1/2. Functionally, catalyzes the transfer of a ribosyl phosphate group from 5-phosphoribose 1-diphosphate to orotate, leading to the formation of orotidine monophosphate (OMP). In Methanosarcina mazei (strain ATCC BAA-159 / DSM 3647 / Goe1 / Go1 / JCM 11833 / OCM 88) (Methanosarcina frisia), this protein is Orotate phosphoribosyltransferase.